The sequence spans 315 residues: High mobility group protein hmg-12 (315 aa).

The disordered stretch occupies residues 57–315; that stretch reads VKNETDSEAV…AIDAFFDGSD (259 aa). Over residues 77-86 the composition is skewed to polar residues; the sequence is ANDSPANTND. Positions 118 to 128 form a DNA-binding region, a.T hook 1; that stretch reads PVKKGRGRPIK. Low complexity-rich tracts occupy residues 147–160 and 196–205; these read AQTP…IDTA and AADTDAIDTA.

It belongs to the HMGA family.

The protein localises to the nucleus. Functionally, transcriptional regulator. Binds to specific sequence motifs in regulatory elements. May recruit transcription factors, or may induce structural changes in chromatin, to thereby modulate embryonic expression of ATP-dependent chaperone cdc-48.1. This is High mobility group protein hmg-12 from Caenorhabditis elegans.